The chain runs to 293 residues: Beta-porphyranase B (293 aa).

An N-terminal signal peptide occupies residues 1 to 21 (MKLSNQFLITITLLITSITFA). Positions 38–291 (QEWKLIENMS…WVRSWQLVDS (254 aa)) constitute a GH16 domain. The substrate site is built by Trp-67, Arg-70, Glu-156, Glu-161, and Glu-256. Residue Glu-156 is the Nucleophile of the active site. The Proton donor role is filled by Glu-161.

It belongs to the glycosyl hydrolase 16 family.

It localises to the periplasm. It carries out the reaction Hydrolysis of beta-D-galactopyranose-(1-&gt;4)-alpha-L-galactopyranose-6-sulfate linkages in porphyran.. Cleaves the sulfated polysaccharide porphyran at the (1-&gt;4) linkages between beta-D-galactopyranose and alpha-L-galactopyranose-6-sulfate, forming mostly the disaccharide alpha-L-galactopyranose-6-sulfate-(1-&gt;3)-beta-D-galactose. Some longer oligosaccharides of even number of residues are also observed. Inactive on the non-sulfated agarose portion of the porphyran backbone. In contrast to PorA, tolerates the presence of 3-6-anhydro-L-galactose in subsite -2. This is Beta-porphyranase B (porB) from Zobellia galactanivorans (strain DSM 12802 / CCUG 47099 / CIP 106680 / NCIMB 13871 / Dsij).